Consider the following 509-residue polypeptide: 3-octaprenyl-4-hydroxybenzoate carboxy-lyase (509 aa).

Asn179 contacts Mn(2+). Residues 182 to 184 (IYR), 196 to 198 (RWL), and 201 to 202 (RG) each bind prenylated FMN. Glu245 lines the Mn(2+) pocket. The active-site Proton donor is the Asp304.

This sequence belongs to the UbiD family. As to quaternary structure, homohexamer. Prenylated FMN is required as a cofactor. The cofactor is Mn(2+).

Its subcellular location is the cell membrane. The enzyme catalyses a 4-hydroxy-3-(all-trans-polyprenyl)benzoate + H(+) = a 2-(all-trans-polyprenyl)phenol + CO2. It participates in cofactor biosynthesis; ubiquinone biosynthesis. Its function is as follows. Catalyzes the decarboxylation of 3-octaprenyl-4-hydroxy benzoate to 2-octaprenylphenol, an intermediate step in ubiquinone biosynthesis. This chain is 3-octaprenyl-4-hydroxybenzoate carboxy-lyase, found in Cupriavidus pinatubonensis (strain JMP 134 / LMG 1197) (Cupriavidus necator (strain JMP 134)).